Here is a 530-residue protein sequence, read N- to C-terminus: Membrane-associated transporter protein (530 aa).

Residues 1 to 45 lie on the Cytoplasmic side of the membrane; the sequence is MSGSNGPTDTHTYQSLAEDCPFGSVEQPKRSTGRLVMHSMAMFGR. Residues 46–66 traverse the membrane as a helical segment; that stretch reads EFCYAVEAAYVTPVLLSVGLP. At 67-68 the chain is on the extracellular side; that stretch reads KS. Residues 69–89 form a helical membrane-spanning segment; it reads LYSMVWLLSPILGFLLQPVVG. The Cytoplasmic portion of the chain corresponds to 90–105; sequence SASDHCRARWGRRRPY. The chain crosses the membrane as a helical span at residues 106–126; that stretch reads ILTLAIMMLLGMALYLNGDAV. Over 127 to 138 the chain is Extracellular; sequence VSALVANPRQKL. The helical transmembrane segment at 139–159 threads the bilayer; that stretch reads IWAISITMVGVVLFDFSADFI. Residues 160–184 lie on the Cytoplasmic side of the membrane; it reads DGPIKAYLFDVCSHQDKEKGLHYHA. A helical transmembrane segment spans residues 185-205; that stretch reads LFTGFGGALGYILGAIDWVHL. At 206–216 the chain is on the extracellular side; it reads DLGRLLGTEFQ. The helical transmembrane segment at 217-237 threads the bilayer; the sequence is VMFFFSALVLILCFITHLCSI. Topologically, residues 238 to 318 are cytoplasmic; sequence PEAPLRDAAT…ALVNMPSHYR (81 aa). Positions 275–299 are disordered; that stretch reads KNGGADTEQPVQEWKNKKPSGQSQR. The chain crosses the membrane as a helical span at residues 319–339; that stretch reads CLCVSHLIGWTAFLSNMLFFT. At 340–366 the chain is on the extracellular side; the sequence is DFMGQIVYHGDPYGAHNSTEFLIYERG. Asn-356 carries N-linked (GlcNAc...) asparagine glycosylation. A helical transmembrane segment spans residues 367 to 387; the sequence is VEVGCWGLCINSVFSSVYSYF. The Cytoplasmic portion of the chain corresponds to 388 to 398; the sequence is QKAMVSYIGLK. Residues 399–419 form a helical membrane-spanning segment; sequence GLYFMGYLLFGLGTGFIGLFP. Residues 420–425 lie on the Extracellular side of the membrane; that stretch reads NVYSTL. The helical transmembrane segment at 426–446 threads the bilayer; the sequence is VLCSMFGVMSSTLYTVPFNLI. Residues 447–477 lie on the Cytoplasmic side of the membrane; sequence AEYHREEEKEKGQEAPGGPDNQGRGKGVDCA. The chain crosses the membrane as a helical span at residues 478-498; the sequence is ALTCMVQLAQILVGGGLGFLV. Over 499–504 the chain is Extracellular; that stretch reads NMAGSV. A helical transmembrane segment spans residues 505-525; that stretch reads VVVVITASAVSLIGCCFVALF. Residues 526-530 are Cytoplasmic-facing; sequence VRYVD.

The protein belongs to the glycoside-pentoside-hexuronide (GPH) cation symporter transporter (TC 2.A.2) family. Interacts with TYRP1. In terms of tissue distribution, mainly expressed in eyeballs and skin melanocytes. Also detected in kidney, colon, gall bladder and pancreas.

It localises to the melanosome membrane. The catalysed reaction is sucrose(out) + H(+)(out) = sucrose(in) + H(+)(in). The enzyme catalyses D-glucose(out) + H(+)(out) = D-glucose(in) + H(+)(in). Proton-associated glucose and sucrose transporter. May be able to transport also fructose. Expressed at a late melanosome maturation stage where functions as a proton/glucose exporter which increase lumenal pH by decreasing glycolysis. Regulates melanogenesis by maintaining melanosome neutralization that is initially initiated by transient OCA2 and required for a proper function of the tyrosinase TYR. This chain is Membrane-associated transporter protein (Slc45a2), found in Mus musculus (Mouse).